Consider the following 473-residue polypeptide: Photosystem II CP43 reaction center protein (473 aa).

A propeptide spanning residues 1–14 is cleaved from the precursor; the sequence is MKTLYSLRRFYHVE. The residue at position 15 (threonine 15) is an N-acetylthreonine. Position 15 is a phosphothreonine (threonine 15). Transmembrane regions (helical) follow at residues 69–93, 134–155, 178–200, 255–275, and 291–312; these read LFEV…PHLA, LLGP…KDRN, KAFY…RKIT, KPFA…LSYS, and WFNN…ASQA. [CaMn4O5] cluster is bound at residue glutamate 367. A helical transmembrane segment spans residues 447-471; the sequence is RARAAAAGFEKGIDRDFEPVLSMTP.

Belongs to the PsbB/PsbC family. PsbC subfamily. As to quaternary structure, PSII is composed of 1 copy each of membrane proteins PsbA, PsbB, PsbC, PsbD, PsbE, PsbF, PsbH, PsbI, PsbJ, PsbK, PsbL, PsbM, PsbT, PsbX, PsbY, PsbZ, Psb30/Ycf12, at least 3 peripheral proteins of the oxygen-evolving complex and a large number of cofactors. It forms dimeric complexes. Requires Binds multiple chlorophylls and provides some of the ligands for the Ca-4Mn-5O cluster of the oxygen-evolving complex. It may also provide a ligand for a Cl- that is required for oxygen evolution. PSII binds additional chlorophylls, carotenoids and specific lipids. as cofactor.

The protein resides in the plastid. It is found in the chloroplast thylakoid membrane. Functionally, one of the components of the core complex of photosystem II (PSII). It binds chlorophyll and helps catalyze the primary light-induced photochemical processes of PSII. PSII is a light-driven water:plastoquinone oxidoreductase, using light energy to abstract electrons from H(2)O, generating O(2) and a proton gradient subsequently used for ATP formation. The polypeptide is Photosystem II CP43 reaction center protein (Pisum sativum (Garden pea)).